The primary structure comprises 158 residues: Small ribosomal subunit protein uS9 (158 aa).

Belongs to the universal ribosomal protein uS9 family.

In Brucella canis (strain ATCC 23365 / NCTC 10854 / RM-666), this protein is Small ribosomal subunit protein uS9.